Here is a 127-residue protein sequence, read N- to C-terminus: Ribosome-binding factor A (127 aa).

It belongs to the RbfA family. In terms of assembly, monomer. Binds 30S ribosomal subunits, but not 50S ribosomal subunits or 70S ribosomes.

The protein localises to the cytoplasm. Functionally, one of several proteins that assist in the late maturation steps of the functional core of the 30S ribosomal subunit. Associates with free 30S ribosomal subunits (but not with 30S subunits that are part of 70S ribosomes or polysomes). Required for efficient processing of 16S rRNA. May interact with the 5'-terminal helix region of 16S rRNA. The chain is Ribosome-binding factor A from Geobacillus kaustophilus (strain HTA426).